We begin with the raw amino-acid sequence, 383 residues long: ATP phosphoribosyltransferase regulatory subunit (383 aa).

It belongs to the class-II aminoacyl-tRNA synthetase family. HisZ subfamily. As to quaternary structure, heteromultimer composed of HisG and HisZ subunits.

The protein localises to the cytoplasm. It participates in amino-acid biosynthesis; L-histidine biosynthesis; L-histidine from 5-phospho-alpha-D-ribose 1-diphosphate: step 1/9. Its function is as follows. Required for the first step of histidine biosynthesis. May allow the feedback regulation of ATP phosphoribosyltransferase activity by histidine. This chain is ATP phosphoribosyltransferase regulatory subunit, found in Janthinobacterium sp. (strain Marseille) (Minibacterium massiliensis).